Consider the following 388-residue polypeptide: DNA primase small subunit PriS (388 aa).

Residues aspartate 100, aspartate 102, and aspartate 288 contribute to the active site.

Belongs to the eukaryotic-type primase small subunit family. In terms of assembly, heterodimer of a small subunit (PriS) and a large subunit (PriL). Mg(2+) is required as a cofactor. The cofactor is Mn(2+).

Catalytic subunit of DNA primase, an RNA polymerase that catalyzes the synthesis of short RNA molecules used as primers for DNA polymerase during DNA replication. The small subunit contains the primase catalytic core and has DNA synthesis activity on its own. Binding to the large subunit stabilizes and modulates the activity, increasing the rate of DNA synthesis while decreasing the length of the DNA fragments, and conferring RNA synthesis capability. The DNA polymerase activity may enable DNA primase to also catalyze primer extension after primer synthesis. May also play a role in DNA repair. The polypeptide is DNA primase small subunit PriS (Methanospirillum hungatei JF-1 (strain ATCC 27890 / DSM 864 / NBRC 100397 / JF-1)).